A 1024-amino-acid polypeptide reads, in one-letter code: Protein sumv-1 (1024 aa).

Disordered regions lie at residues 447–486, 501–564, 577–617, 645–664, 710–739, and 773–1024; these read DASQ…KKMP, NFQG…RRGV, PSRH…RSQA, SQMA…GSPQ, VRSG…DTVQ, and AGNS…EEEL. 3 stretches are compositionally biased toward polar residues: residues 467–486, 501–514, and 528–542; these read SFGT…KKMP, NFQG…SSAT, and RSQQ…QTQD. The span at 584-600 shows a compositional bias: low complexity; the sequence is SPLTPSTSTSSSQLLAP. Positions 605-617 are enriched in polar residues; it reads QPGTSSQTFRSQA. Composition is skewed to low complexity over residues 710–730 and 784–809; these read VRSG…ASGS and AGAP…ASTS. Residues 810–832 are compositionally biased toward polar residues; the sequence is VPEPTKSSESSVDPQSDVSFSNP. Residues 859-870 are compositionally biased toward low complexity; that stretch reads TLASESTSSEAT. Polar residues predominate over residues 873–883; sequence HDTTSSSSAET. Basic and acidic residues predominate over residues 903–914; the sequence is PEKEKEKIDRPK. Composition is skewed to low complexity over residues 916 to 943, 952 to 962, and 970 to 986; these read PKSS…NQAI, SASTSSSAAST, and LLAE…QQQA. The span at 987 to 998 shows a compositional bias: polar residues; sequence IGSTSKNGGSTK.

It localises to the nucleus. Its subcellular location is the cytoplasm. The protein resides in the cell projection. It is found in the axon. Its function is as follows. Nuclear factor that influences the activity of genes involved in vulval development. This is Protein sumv-1 from Caenorhabditis elegans.